A 386-amino-acid polypeptide reads, in one-letter code: Aspartate carbamoyltransferase 1, chloroplastic (386 aa).

Residues 1–39 constitute a chloroplast transit peptide; that stretch reads MTVASMLSSNSMNVGVSNPKMSSKTSACCLLNRPWPSSC. The carbamoyl phosphate site is built by arginine 132 and threonine 133. Residues arginine 132 and threonine 133 each contribute to the UMP site. Residue lysine 162 coordinates L-aspartate. Residues arginine 183, histidine 211, and glutamine 214 each contribute to the carbamoyl phosphate site. Arginine 183 and histidine 211 together coordinate UMP. Positions 244 and 306 each coordinate UMP. Residues arginine 244 and arginine 306 each contribute to the L-aspartate site. Carbamoyl phosphate-binding residues include leucine 346 and proline 347.

The protein belongs to the aspartate/ornithine carbamoyltransferase superfamily. ATCase family. In terms of assembly, homotrimer.

It localises to the plastid. The protein resides in the chloroplast. It carries out the reaction carbamoyl phosphate + L-aspartate = N-carbamoyl-L-aspartate + phosphate + H(+). It participates in pyrimidine metabolism; UMP biosynthesis via de novo pathway; (S)-dihydroorotate from bicarbonate: step 2/3. With respect to regulation, feedback inhibited by UMP. Functionally, catalyzes the condensation of carbamoyl phosphate and aspartate to form carbamoyl aspartate and inorganic phosphate, the committed step in the de novo pyrimidine nucleotide biosynthesis pathway. This is Aspartate carbamoyltransferase 1, chloroplastic (PYRB1) from Pisum sativum (Garden pea).